The sequence spans 199 residues: Large ribosomal subunit protein bL17 (199 aa).

Residues 123–199 (DEANRARRAA…EESEAKDDTK (77 aa)) are disordered. Residues 137 to 152 (KADERADEKADEKAEE) show a composition bias toward basic and acidic residues. Positions 153 to 199 (TVEETTEAPAEESTEAAAEETVEETTEAPAEESTEAAEESEAKDDTK) are enriched in acidic residues.

It belongs to the bacterial ribosomal protein bL17 family. In terms of assembly, part of the 50S ribosomal subunit. Contacts protein L32.

In Mycolicibacterium smegmatis (strain ATCC 700084 / mc(2)155) (Mycobacterium smegmatis), this protein is Large ribosomal subunit protein bL17.